A 339-amino-acid chain; its full sequence is Erlin-2 (339 aa).

Topologically, residues 1–3 are cytoplasmic; it reads MAQ. The helical transmembrane segment at 4-24 threads the bilayer; that stretch reads LGAVVAVASSFFCASLFSAVH. Residues 25–339 lie on the Extracellular side of the membrane; the sequence is KIEEGHIGVY…EPLETATKDN (315 aa). Asn106 carries an N-linked (GlcNAc...) asparagine glycan. Residues 177-309 are interaction with ERLIN1; the sequence is EAIRRNYELM…DIPNMFMDSA (133 aa). Lys267 is modified (N6-acetyllysine).

The protein belongs to the band 7/mec-2 family. In terms of assembly, forms a heteromeric complex with ERLIN1. In complex with ERLIN1, interacts with RNF170. Interacts with activated ITPR1, independently of the degree of ITPR1 polyubiquitination. Interacts with SCAP, INSIG1, SREBF1 and SREBF2 under cholesterol sufficiency conditions; indicative for an association with the SCAP-SREBP-INSIG complex. Probably part of an AMFR/gp78 and INSIG1-containing ubiquitin ligase complex involved in ERAD of HMGCR. Interacts with TMUB1; TMUB1 bridges the association with AMFR. Interacts with SYVN1 and RNF139. Interacts with TMEM259. Interacts with TMEM41B. Post-translationally, deubiquitinated by USP25; leading to stabilization.

Its subcellular location is the endoplasmic reticulum membrane. In terms of biological role, component of the ERLIN1/ERLIN2 complex which mediates the endoplasmic reticulum-associated degradation (ERAD) of inositol 1,4,5-trisphosphate receptors (IP3Rs) such as ITPR1. Promotes sterol-accelerated ERAD of HMGCR probably implicating an AMFR/gp78-containing ubiquitin ligase complex. Involved in regulation of cellular cholesterol homeostasis by regulation the SREBP signaling pathway. May promote ER retention of the SCAP-SREBF complex. This is Erlin-2 from Rattus norvegicus (Rat).